Here is a 1097-residue protein sequence, read N- to C-terminus: MSSSAIQVAKTATYLPDLVEVQRASFKWFLEKGLIEELESFSPITDYTGKLELHFVGSEYRLKRPRHDVEEAKRRDATFASQMYVTCRLVNKETGEIKEQEVFIGELPLMTERGTFIINGAERVIVNQIVRSPGVYFKDEQDKNGRRTYNASVIPNRGAWLKFETDKNDLLHVRVDKTRKINAHVLMRAMGLSDNDVIDKLRHPEYYKKSIEAANDEGISSEDQALLELYKKLRPGEPPSVSGGQQLLQTRFFDPKRYDLGRVGRYKINKKLRLTIPDSVRTLTHEDVLSTLDYLINLELDVGGASLDDIDHLGNRRVRSVGELLQNQVRVGLNRLERIIKERMTVGETDSLTPAQLVNPKPLVAAIKEFFGSSQLSQFMDQTNPLAELTHKRRISALGPGGLTRERAGFAVRDIHPSHYGRLCPIETPEGPNAGLINSLATHARVNEYGFIETPFWKVENGRVLKQGDPIYLSADLEDECRVAPGDVATDSDGAILADLIPVRYRQDFEKVPPEQVDYVQLSPVQVISVATSLIPFLEHDDANRALMGSNMQRQAVPLLRPERPLVGTGLETQVARDSGMVPISRVNGTVTFVDATAIVVRDEEGVDHSHYLQKYQRSNQDTCLNQRPIVRQGDPVIVGQVLADGSACEGGEIALGQNVLIAYMPWEGYNYEDAILVSERLVNDDLYTSVHIEKYEIEARQTKLGPEEITREIPNVAEESLGNLDEMGIIRIGAFVESGDILVGKVTPKGESDQPPEEKLLRAIFGEKARDVRDNSLRVPSTERGRVVDVRIYTREQGDELPPGANMVVRVYVAQRRKIQVGDKMAGRHGNKGIISRILPREDMPYLPDGTPVDIVLNPLGVPSRMNVGQVFELLMGWAAANLDCRVKVVPFDEMYGAEKSQQTVETFLKEAAKQPGKEWIYNPDDPGKLQLIDGRSGEPFDQPVAVGYSHFLKLVHLVDDKIHARSTGPYSLVTQQPLGGKAQQGGQRLGEMEVWALEAYGAAYTLQELLTVKSDDMQGRNEALNAIVKGKPIPRPGTPESFKVLMRELQSLGLDIAVFTDEGKEVDLMQDVNPRRSTPSRPTYESLGVADYDED.

The disordered stretch occupies residues 1072 to 1097 (QDVNPRRSTPSRPTYESLGVADYDED).

This sequence belongs to the RNA polymerase beta chain family. In cyanobacteria the RNAP catalytic core is composed of 2 alpha, 1 beta, 1 beta', 1 gamma and 1 omega subunit. When a sigma factor is associated with the core the holoenzyme is formed, which can initiate transcription.

It catalyses the reaction RNA(n) + a ribonucleoside 5'-triphosphate = RNA(n+1) + diphosphate. DNA-dependent RNA polymerase catalyzes the transcription of DNA into RNA using the four ribonucleoside triphosphates as substrates. In Synechococcus sp. (strain WH7803), this protein is DNA-directed RNA polymerase subunit beta.